An 875-amino-acid chain; its full sequence is Alanine--tRNA ligase (875 aa).

Residues His564, His568, Cys666, and His670 each contribute to the Zn(2+) site.

The protein belongs to the class-II aminoacyl-tRNA synthetase family. As to quaternary structure, homotetramer. The cofactor is Zn(2+).

It is found in the cytoplasm. The enzyme catalyses tRNA(Ala) + L-alanine + ATP = L-alanyl-tRNA(Ala) + AMP + diphosphate. In terms of biological role, catalyzes the attachment of alanine to tRNA(Ala) in a two-step reaction: alanine is first activated by ATP to form Ala-AMP and then transferred to the acceptor end of tRNA(Ala). Also edits incorrectly charged Ser-tRNA(Ala) and Gly-tRNA(Ala) via its editing domain. The polypeptide is Alanine--tRNA ligase (Yersinia enterocolitica serotype O:8 / biotype 1B (strain NCTC 13174 / 8081)).